Here is a 131-residue protein sequence, read N- to C-terminus: Large ribosomal subunit protein bL12 (131 aa).

The protein belongs to the bacterial ribosomal protein bL12 family. In terms of assembly, homodimer. Part of the ribosomal stalk of the 50S ribosomal subunit. Forms a multimeric L10(L12)X complex, where L10 forms an elongated spine to which 2 to 4 L12 dimers bind in a sequential fashion. Binds GTP-bound translation factors.

Its function is as follows. Forms part of the ribosomal stalk which helps the ribosome interact with GTP-bound translation factors. Is thus essential for accurate translation. In Prochlorococcus marinus (strain MIT 9301), this protein is Large ribosomal subunit protein bL12.